Reading from the N-terminus, the 488-residue chain is Ergochrome gene cluster transcriptional regulator CPUR_05433 (488 aa).

The disordered stretch occupies residues 1–29; it reads MDHSIGGRNCQSGGTTASAPRSTGSDEFP. Over residues 9-25 the composition is skewed to polar residues; the sequence is NCQSGGTTASAPRSTGS. A DNA-binding region (zn(2)-C6 fungal-type) is located at residues 36-63; that stretch reads CHACSLSKVRCSKEKPSCSRCAKRGVPC.

The protein localises to the nucleus. In terms of biological role, transcription factor; part of the gene cluster responsible for the typical purple-black color of the ergot sclerotia. The ergochrome gene cluster produces several ergot pigments including the yellow ergochrome secalonic acid and its derivatives, as well as the red anthraquinones endocrocin and clavorubin. The sequence is that of Ergochrome gene cluster transcriptional regulator CPUR_05433 from Claviceps purpurea (strain 20.1) (Ergot fungus).